Consider the following 653-residue polypeptide: Poly [ADP-ribose] polymerase 2 (653 aa).

The SAP 1 domain maps to 2–36 (SARLRVADVRAELQRRGLDVSGTKPALVRRLDAAI). Residues 64 to 84 (NCGNNKRKRSGDGGEEGNGDT) form a disordered region. Positions 69 to 72 (KRKR) match the Nuclear localization signal motif. Positions 91–125 (LEGMSYRELQGLAKARGVAANGGKKDVIQRLLSAT) constitute an SAP 2 domain. The 98-residue stretch at 179–276 (NYHVLQVGDE…KNFKCYAKKY (98 aa)) folds into the WGR domain. Residues 301–419 (ETKLETRIAQ…EIEIATKLLE (119 aa)) form the PARP alpha-helical domain. The 227-residue stretch at 427–653 (DPLYARYKQL…LHVNFNFKRR (227 aa)) folds into the PARP catalytic domain.

Belongs to the ARTD/PARP family.

The protein localises to the nucleus. The catalysed reaction is NAD(+) + (ADP-D-ribosyl)n-acceptor = nicotinamide + (ADP-D-ribosyl)n+1-acceptor + H(+).. It carries out the reaction L-aspartyl-[protein] + NAD(+) = 4-O-(ADP-D-ribosyl)-L-aspartyl-[protein] + nicotinamide. The enzyme catalyses L-glutamyl-[protein] + NAD(+) = 5-O-(ADP-D-ribosyl)-L-glutamyl-[protein] + nicotinamide. Functionally, involved in the base excision repair (BER) pathway, by catalyzing the poly(ADP-ribosyl)ation of a limited number of acceptor proteins involved in chromatin architecture and in DNA metabolism. This modification follows DNA damages and appears as an obligatory step in a detection/signaling pathway leading to the reparation of DNA strand breaks. This chain is Poly [ADP-ribose] polymerase 2 (PARP2), found in Zea mays (Maize).